Here is a 474-residue protein sequence, read N- to C-terminus: L-lactate permease (474 aa).

The next 11 membrane-spanning stretches (helical) occupy residues 4–21 (AILA…LAVF), 28–48 (ACFI…HFSI), 63–85 (FWPI…ASGG), 105–127 (LILA…AVAI), 142–164 (AALI…LPVT), 177–199 (LSVI…LVSL), 209–231 (GVFG…VSNY), 238–255 (SIIG…FVNL), 281–303 (FILV…QLLA), 324–346 (WLTS…QGMS), and 387–409 (IAVS…IGTL).

Belongs to the lactate permease family.

Its subcellular location is the cell membrane. Functionally, plays a role in L-lactate utilization. The chain is L-lactate permease (lctP) from Streptococcus iniae (Streptococcus shiloi).